Here is a 151-residue protein sequence, read N- to C-terminus: Inorganic triphosphatase (151 aa).

The CYTH domain occupies 1–148 (MTEIERKFLV…KRYKNKALAL (148 aa)). Tyrosine 27 (proton acceptor) is an active-site residue.

In terms of assembly, homodimer.

The catalysed reaction is triphosphate + H2O = phosphate + diphosphate. With respect to regulation, activated by magnesium and mangenese ions, and inhibited by calcium, zinc and copper ions. Involved in the hydrolysis of the beta-gamma-phosphoanhydride linkage of triphosphate-containing substrates (inorganic or nucleoside-linked). Catalyzes the hydrolysis of inorganic triphosphate (PPPi). The enzyme has a strong preference for linear PPPi compared with cyclic PPPi (cyclic trimetaphosphate) and to the linear P4. The longer chains polyphosphate are not hydrolyzed. It has only a slight thiamine triphosphatase (ThTPase) activity. Nucleoside triphosphatase activity is negligible in the presence of magnesium, but a small activity is observed in the presence of manganese, in particular with GTP. This Nitrosomonas europaea (strain ATCC 19718 / CIP 103999 / KCTC 2705 / NBRC 14298) protein is Inorganic triphosphatase.